Consider the following 303-residue polypeptide: Ribosomal protein L11 methyltransferase (303 aa).

Positions 144, 165, 187, and 235 each coordinate S-adenosyl-L-methionine.

Belongs to the methyltransferase superfamily. PrmA family.

It localises to the cytoplasm. The enzyme catalyses L-lysyl-[protein] + 3 S-adenosyl-L-methionine = N(6),N(6),N(6)-trimethyl-L-lysyl-[protein] + 3 S-adenosyl-L-homocysteine + 3 H(+). Methylates ribosomal protein L11. The sequence is that of Ribosomal protein L11 methyltransferase from Prochlorococcus marinus (strain AS9601).